A 135-amino-acid chain; its full sequence is Large ribosomal subunit protein uL16c (135 aa).

This sequence belongs to the universal ribosomal protein uL16 family. In terms of assembly, part of the 50S ribosomal subunit.

It is found in the plastid. It localises to the chloroplast. The sequence is that of Large ribosomal subunit protein uL16c from Ranunculus macranthus (Large buttercup).